Reading from the N-terminus, the 178-residue chain is Ribosomal RNA small subunit methyltransferase G (178 aa).

S-adenosyl-L-methionine is bound by residues Gly54, Leu59, 105–106, and Arg120; that span reads LE.

The protein belongs to the methyltransferase superfamily. RNA methyltransferase RsmG family.

The protein localises to the cytoplasm. The catalysed reaction is guanosine(527) in 16S rRNA + S-adenosyl-L-methionine = N(7)-methylguanosine(527) in 16S rRNA + S-adenosyl-L-homocysteine. Functionally, specifically methylates the N7 position of guanine in position 527 of 16S rRNA. The polypeptide is Ribosomal RNA small subunit methyltransferase G (Helicobacter pylori (strain HPAG1)).